A 199-amino-acid polypeptide reads, in one-letter code: V-type proton ATPase subunit E (199 aa).

The protein belongs to the V-ATPase E subunit family.

Produces ATP from ADP in the presence of a proton gradient across the membrane. This Clostridium botulinum (strain 657 / Type Ba4) protein is V-type proton ATPase subunit E.